The primary structure comprises 545 residues: Chaperonin GroEL (545 aa).

Residues 29 to 32, Lys-50, 86 to 90, Gly-413, and Asp-495 each bind ATP; these read TLGP and DGTTT.

This sequence belongs to the chaperonin (HSP60) family. As to quaternary structure, forms a cylinder of 14 subunits composed of two heptameric rings stacked back-to-back. Interacts with the co-chaperonin GroES.

It is found in the cytoplasm. It carries out the reaction ATP + H2O + a folded polypeptide = ADP + phosphate + an unfolded polypeptide.. Functionally, together with its co-chaperonin GroES, plays an essential role in assisting protein folding. The GroEL-GroES system forms a nano-cage that allows encapsulation of the non-native substrate proteins and provides a physical environment optimized to promote and accelerate protein folding. The polypeptide is Chaperonin GroEL (Borrelia garinii subsp. bavariensis (strain ATCC BAA-2496 / DSM 23469 / PBi) (Borreliella bavariensis)).